The primary structure comprises 519 residues: Phosphate acetyltransferase (519 aa).

The interval 196–519 (AFQRSLEKKA…LISAIQAQDY (324 aa)) is phosphate acetyltransferase.

It in the N-terminal section; belongs to the CobB/CobQ family. In the C-terminal section; belongs to the phosphate acetyltransferase and butyryltransferase family.

The protein localises to the cytoplasm. It catalyses the reaction acetyl-CoA + phosphate = acetyl phosphate + CoA. It functions in the pathway metabolic intermediate biosynthesis; acetyl-CoA biosynthesis; acetyl-CoA from acetate: step 2/2. This Helicobacter pylori (strain J99 / ATCC 700824) (Campylobacter pylori J99) protein is Phosphate acetyltransferase (pta).